A 111-amino-acid polypeptide reads, in one-letter code: Nucleoid-associated protein Clim_0875 (111 aa).

This sequence belongs to the YbaB/EbfC family. In terms of assembly, homodimer.

Its subcellular location is the cytoplasm. It is found in the nucleoid. Binds to DNA and alters its conformation. May be involved in regulation of gene expression, nucleoid organization and DNA protection. The polypeptide is Nucleoid-associated protein Clim_0875 (Chlorobium limicola (strain DSM 245 / NBRC 103803 / 6330)).